The primary structure comprises 132 residues: Putative RNase AF_0947 (132 aa).

Catalysis depends on residues Arg-91 and His-96. The RX(4)HXY motif motif lies at 91 to 98 (RNAIAHHY). Residue Tyr-98 is modified to O-di-AMP-tyrosine.

This sequence belongs to the HepT RNase toxin family. Homodimer, probably forms a complex with cognate antitoxin AF_0948. Post-translationally, modified by cognate antitoxin AF_0948; probably at least 2 successive AMPylation events occur on Tyr-98.

Functionally, probable toxic component of a putative type VII toxin-antitoxin (TA) system, probably an RNase. Probably neutralized by cognate antitoxin AF_0948. Neutralization may be due to AMPylation by AF_0948. This is Putative RNase AF_0947 from Archaeoglobus fulgidus (strain ATCC 49558 / DSM 4304 / JCM 9628 / NBRC 100126 / VC-16).